The chain runs to 189 residues: Adenylate kinase (189 aa).

Position 11–16 (11–16) interacts with ATP; it reads GSGKGT. An NMP region spans residues 31–60; that stretch reads STGDVLRAEIKKGTELGKTAKGYIDQGQLL. AMP-binding positions include threonine 32, arginine 37, 58–60, 86–89, and glutamine 93; these read QLL and GFPR. The segment at 127-137 is LID; it reads KRGQESGRADD. Arginine 128 contributes to the ATP binding site. Positions 134 and 145 each coordinate AMP. Glycine 173 lines the ATP pocket.

Belongs to the adenylate kinase family. Monomer.

It is found in the cytoplasm. It catalyses the reaction AMP + ATP = 2 ADP. Its pathway is purine metabolism; AMP biosynthesis via salvage pathway; AMP from ADP: step 1/1. Its function is as follows. Catalyzes the reversible transfer of the terminal phosphate group between ATP and AMP. Plays an important role in cellular energy homeostasis and in adenine nucleotide metabolism. This is Adenylate kinase from Phocaeicola vulgatus (strain ATCC 8482 / DSM 1447 / JCM 5826 / CCUG 4940 / NBRC 14291 / NCTC 11154) (Bacteroides vulgatus).